Here is a 144-residue protein sequence, read N- to C-terminus: Large ribosomal subunit protein uL16 (144 aa).

The protein belongs to the universal ribosomal protein uL16 family. As to quaternary structure, part of the 50S ribosomal subunit.

Functionally, binds 23S rRNA and is also seen to make contacts with the A and possibly P site tRNAs. The sequence is that of Large ribosomal subunit protein uL16 from Bacillus mycoides (strain KBAB4) (Bacillus weihenstephanensis).